The sequence spans 2090 residues: Host cell factor 1 (2090 aa).

At Ala2 the chain carries N-acetylalanine. Residue Ser6 is modified to Phosphoserine. 5 Kelch repeats span residues 44–89, 93–140, 148–194, 217–265, and 266–313; these read LIVV…GFVC, RLLV…RLGH, KCYL…ITYG, KLVI…TIGN, and KMYV…LMDT. Glycyl lysine isopeptide (Lys-Gly) (interchain with G-Cter in ubiquitin) cross-links involve residues Lys105, Lys163, and Lys244. A Glycyl lysine isopeptide (Lys-Gly) (interchain with G-Cter in SUMO2) cross-link involves residue Lys282. Lys288 carries the post-translational modification N6-acetyllysine. Lys363 is covalently cross-linked (Glycyl lysine isopeptide (Lys-Gly) (interchain with G-Cter in ubiquitin)). The 104-residue stretch at 366-469 folds into the Fibronectin type-III 1 domain; it reads PPARVQLVRA…TIQVLPTVPG (104 aa). Residues 407–434 form a disordered region; that stretch reads ATATSPTPNPVPSVPANPPKSPAPAAAA. Ser411 is subject to Phosphoserine. Over residues 413-428 the composition is skewed to pro residues; sequence TPNPVPSVPANPPKSP. Positions 500 to 550 are required for interaction with OGT; that stretch reads LVTMRPAGQAGKAPVTVTSLPASVRMVVPTQSAQGTVIGSNPQMSGMAALA. Residues Arg504 and Arg524 each carry the omega-N-methylarginine modification. Phosphoserine occurs at positions 598, 666, and 669. The segment at 610-722 is interaction with SIN3A; sequence LKTAAAQVGT…KGPLPAGTIL (113 aa). An interaction with ZBTB17 region spans residues 750-902; sequence ILGISSVSPS…SLAGAGAHST (153 aa). Lys813 is subject to N6-acetyllysine. The segment at 813–912 is interaction with GABP2; it reads KIITAVPKIA…SASLATPITT (100 aa). HCF repeat repeat units lie at residues 1010-1035, 1072-1097, and 1101-1126; these read TLVC…TVVA, VRVC…ATSN, and QHGC…AMSS. A disordered region spans residues 1098–1140; that stretch reads MAGQHGCSNPPCETHETGTTSTATTAMSSMGTGQQRDTRHTSS. The segment covering 1114 to 1130 has biased composition (low complexity); sequence TGTTSTATTAMSSMGTG. An HCF repeat 4; degenerate repeat occupies 1157–1182; sequence TQGTVKPQCQTQQANMTNTTMTVQAT. Ser1204 is modified (phosphoserine). Residue Arg1216 is modified to Asymmetric dimethylarginine. Ser1223 bears the Phosphoserine mark. HCF repeat repeat units lie at residues 1295-1320 and 1323-1348; these read TQVC…SNAG and QRVC…ATSN. Disordered stretches follow at residues 1302–1374 and 1444–1486; these read PCET…TTST and TVTS…TTVS. Over residues 1308–1321 the composition is skewed to low complexity; sequence TGTTNTATTSNAGS. The stretch at 1358–1383 is one HCF repeat 7; degenerate repeat; it reads QQPAGGRPCETHQTTSTGTTMSVSVG. Residues 1423 to 1448 form an HCF repeat 8 repeat; the sequence is QRVCSNPPCETHETGTTHTATTVTSN. A compositionally biased stretch (polar residues) spans 1465–1475; sequence VVSTQGDSANI. Over residues 1476–1486 the composition is skewed to low complexity; sequence TSSSGITTTVS. At Thr1500 the chain carries Phosphothreonine. Phosphoserine is present on residues Ser1506, Ser1559, and Ser1826. 2 consecutive Fibronectin type-III domains span residues 1853–1943 and 1945–2061; these read PPPP…TCLP and FPGA…TSKD. Glycyl lysine isopeptide (Lys-Gly) (interchain with G-Cter in ubiquitin) cross-links involve residues Lys1862 and Lys1863. Ser1893 is subject to Phosphoserine. The segment at 2049-2090 is disordered; sequence ATQVRWLQETSKDSSGTKPASKRPMSSPEMKSAPKKSKADGQ. Position 2060 is an N6-acetyllysine (Lys2060). A Glycyl lysine isopeptide (Lys-Gly) (interchain with G-Cter in SUMO2) cross-link involves residue Lys2079.

As to quaternary structure, composed predominantly of six polypeptides ranging from 110 to 150 kDa and a minor 300 kDa polypeptide. The majority of N- and C-terminal cleavage products remain tightly, albeit non-covalently, associated. Interacts with POU2F1, CREB3, ZBTB17, EGR2, E2F4, CREBZF, SP1, GABP2, Sin3 HDAC complex (SIN3A, HDAC1, HDAC2, SUDS3), SAP30, SIN3B and FHL2. Component of a MLL1 complex, composed of at least the core components KMT2A/MLL1, ASH2L, HCFC1, WDR5 and RBBP5, as well as the facultative components BACC1, CHD8, DPY30, E2F6, HCFC2, HSP70, INO80C, KANSL1, LAS1L, MAX, MCRS1, MEN1, MGA, KAT8, PELP1, PHF20, PRP31, RING2, RUVBL1, RUVBL2, SENP3, TAF1, TAF4, TAF6, TAF7, TAF9 and TEX10. Component of a THAP1/THAP3-HCFC1-OGT complex that is required for the regulation of the transcriptional activity of RRM1. Interacts directly with THAP3 (via its HBM). Interacts (via the Kelch-repeat domain) with THAP1 (via the HBM); the interaction recruits HCHC1 to the RRM1. Interacts directly with OGT; the interaction, which requires the HCFC1 cleavage site domain, glycosylates and promotes the proteolytic processing of HCFC1 and retains OGT in the nucleus. Component of the SET1 complex, at least composed of the catalytic subunit (SETD1A or SETD1B), WDR5, WDR82, RBBP5, ASH2L, CXXC1, HCFC1 and DPY30. Component of the NSL complex at least composed of MOF/KAT8, KANSL1, KANSL2, KANSL3, MCRS1, PHF20, OGT1/OGT, WDR5 and HCFC1. Component of a complex at least composed of ZNF335, HCFC1, CCAR2, EMSY, MKI67, RBBP5, ASH2L and WDR5; the complex is formed as a result of interactions between components of a nuclear receptor-mediated transcription complex and a histone methylation complex. Within the complex interacts with ZNF335. Interacts with TET2 and TET3. Interacts with HCFC1R1. Interacts with THAP11. Interacts (via Kelch domain) with KMT2E (via HBM motif). Interacts with E2F1. Accessory scaffold component of the polycomb repressive deubiquitinase (PR-DUB) complex, at least composed of BAP1, one of ASXL1, ASXL2 or (probably) ASXL3 and one of MBD5 or MBD6; the PR-DUB core associates with a number of accessory proteins, including FOXK1, FOXK2, KDM1B, HCFC1, YY1 and OGT. Interacts with YY1 (via Gly-rich region); the interaction is direct. Interacts with BAP1 (via HBM-like motif). Post-translationally, proteolytically cleaved at one or several PPCE--THET sites within the HCF repeats. Cleavage is promoted by O-glycosylation. Further cleavage of the primary N- and C-terminal chains results in a 'trimming' and accumulation of the smaller chains. Cleavage is promoted by O-glycosylation. In terms of processing, O-glycosylated. GlcNAcylation by OGT promotes proteolytic processing. Ubiquitinated. Lys-1862 and Lys-1863 are ubiquitinated both via 'Lys-48'- and 'Lys-63'-linked polyubiquitin chains. BAP1 mediated deubiquitination of 'Lys-48'-linked polyubiquitin chains; deubiquitination by BAP1 does not seem to stabilize the protein.

The protein resides in the cytoplasm. The protein localises to the nucleus. In terms of biological role, transcriptional coregulator. Serves as a scaffold protein, bridging interactions between transcription factors, including THAP11 and ZNF143, and transcriptional coregulators. Involved in control of the cell cycle. Also antagonizes transactivation by ZBTB17 and GABP2; represses ZBTB17 activation of the p15(INK4b) promoter and inhibits its ability to recruit p300. Coactivator for EGR2 and GABP2. Tethers the chromatin modifying Set1/Ash2 histone H3 'Lys-4' methyltransferase (H3K4me) and Sin3 histone deacetylase (HDAC) complexes (involved in the activation and repression of transcription respectively) together. As part of the NSL complex it may be involved in acetylation of nucleosomal histone H4 on several lysine residues. Recruits KMT2E to E2F1 responsive promoters promoting transcriptional activation and thereby facilitates G1 to S phase transition. Modulates expression of homeobox protein PDX1, perhaps acting in concert with transcription factor E2F1, thereby regulating pancreatic beta-cell growth and glucose-stimulated insulin secretion. May negatively modulate transcriptional activity of FOXO3. This chain is Host cell factor 1, found in Mesocricetus auratus (Golden hamster).